The chain runs to 211 residues: ATP phosphoribosyltransferase (211 aa).

This sequence belongs to the ATP phosphoribosyltransferase family. Short subfamily. In terms of assembly, heteromultimer composed of HisG and HisZ subunits.

The protein resides in the cytoplasm. It catalyses the reaction 1-(5-phospho-beta-D-ribosyl)-ATP + diphosphate = 5-phospho-alpha-D-ribose 1-diphosphate + ATP. It functions in the pathway amino-acid biosynthesis; L-histidine biosynthesis; L-histidine from 5-phospho-alpha-D-ribose 1-diphosphate: step 1/9. Its function is as follows. Catalyzes the condensation of ATP and 5-phosphoribose 1-diphosphate to form N'-(5'-phosphoribosyl)-ATP (PR-ATP). Has a crucial role in the pathway because the rate of histidine biosynthesis seems to be controlled primarily by regulation of HisG enzymatic activity. The sequence is that of ATP phosphoribosyltransferase from Bacillus cereus (strain 03BB102).